The following is a 629-amino-acid chain: Histone-lysine N-methyltransferase set9 (629 aa).

The SET domain maps to 120–234 (CPFEVTTTNR…IGEEITVSYG (115 aa)). Polar residues-rich tracts occupy residues 264–274 (SEASSTASTPA), 338–350 (EQNTKIAVETTTD), 359–376 (NGVTENESNARVSENQRA), and 390–400 (ESQNSSASTAP). Disordered stretches follow at residues 264–400 (SEAS…STAP) and 586–629 (VSFG…RMTM). Basic and acidic residues predominate over residues 597 to 614 (SEPRTETEDSEACDERRN).

The protein belongs to the class V-like SAM-binding methyltransferase superfamily. Histone-lysine methyltransferase family. Suvar4-20 subfamily.

The protein localises to the nucleus. It is found in the chromosome. The catalysed reaction is L-lysyl(20)-[histone H4] + 3 S-adenosyl-L-methionine = N(6),N(6),N(6)-trimethyl-L-lysyl(20)-[histone H4] + 3 S-adenosyl-L-homocysteine + 3 H(+). Its function is as follows. Histone methyltransferase that trimethylates 'Lys-20' of histone H4 to form H4K20me3. In Aspergillus terreus (strain NIH 2624 / FGSC A1156), this protein is Histone-lysine N-methyltransferase set9 (set9).